Consider the following 217-residue polypeptide: Small ribosomal subunit protein eS6 (217 aa).

This sequence belongs to the eukaryotic ribosomal protein eS6 family. Phosphorylated.

This Encephalitozoon cuniculi (strain GB-M1) (Microsporidian parasite) protein is Small ribosomal subunit protein eS6 (RPS6).